The sequence spans 617 residues: Electron transfer flavoprotein-ubiquinone oxidoreductase, mitochondrial (617 aa).

A mitochondrion-targeting transit peptide spans 1–33 (MLVPLAKLSCLAYQCFHALKIKKNYLPLCATRW). 71–85 (VVIVGAGPAGLSAAV) is a binding site for FAD. Residue Lys-96 is modified to N6-acetyllysine. An intramembrane segment occupies 109–130 (IGAHTLSGACLDPGAFKELFPD). An N6-acetyllysine mark is found at Lys-132 and Lys-223. A ubiquinone is bound by residues Gly-305 and Gly-306. Lys-357 carries the N6-acetyllysine modification. Residues 428–447 (IGLHVTEYEDNLKNSWVWKE) lie within the membrane without spanning it. Phosphoserine is present on Ser-551. The [4Fe-4S] cluster site is built by Cys-561, Cys-586, Cys-589, and Cys-592. The 4Fe-4S ferredoxin-type domain maps to 577-606 (FRLQINAQNCVHCKTCDIKDPSQNINWVVP).

Belongs to the ETF-QO/FixC family. Monomer. [4Fe-4S] cluster serves as cofactor. FAD is required as a cofactor.

It localises to the mitochondrion inner membrane. It catalyses the reaction a ubiquinone + reduced [electron-transfer flavoprotein] = a ubiquinol + oxidized [electron-transfer flavoprotein] + H(+). Its function is as follows. Accepts electrons from ETF and reduces ubiquinone. In Homo sapiens (Human), this protein is Electron transfer flavoprotein-ubiquinone oxidoreductase, mitochondrial.